The chain runs to 335 residues: Putative peroxisomal biogenesis factor 19 (335 aa).

Disordered stretches follow at residues Leu14 to Asp70 and Tyr104 to Glu124. Composition is skewed to low complexity over residues Pro22–Ile55 and Asn109–Gly119.

The protein belongs to the peroxin-19 family.

The protein localises to the peroxisome. This Dictyostelium discoideum (Social amoeba) protein is Putative peroxisomal biogenesis factor 19 (pex19).